The following is a 357-amino-acid chain: Probable cinnamyl alcohol dehydrogenase 2 (357 aa).

Cys-47 lines the Zn(2+) pocket. NADP(+) is bound at residue Ser-49. The Zn(2+) site is built by His-69, Glu-70, Cys-100, Cys-103, Cys-106, Cys-114, and Cys-163. NADP(+)-binding positions include Thr-167, Gly-188–Gly-193, Ser-211–Lys-216, Thr-251, Gly-275, and Ser-298–Ile-300.

Belongs to the zinc-containing alcohol dehydrogenase family. As to quaternary structure, homodimer. It depends on Zn(2+) as a cofactor. Post-translationally, the N-terminus is blocked.

It carries out the reaction (E)-cinnamyl alcohol + NADP(+) = (E)-cinnamaldehyde + NADPH + H(+). The catalysed reaction is (E)-coniferol + NADP(+) = (E)-coniferaldehyde + NADPH + H(+). The enzyme catalyses (E)-sinapyl alcohol + NADP(+) = (E)-sinapaldehyde + NADPH + H(+). It catalyses the reaction (E)-4-coumaroyl alcohol + NADP(+) = (E)-4-coumaraldehyde + NADPH + H(+). It carries out the reaction (E)-caffeyl alcohol + NADP(+) = (E)-caffeyl aldehyde + NADPH + H(+). The protein operates within aromatic compound metabolism; phenylpropanoid biosynthesis. Its function is as follows. Involved in lignin biosynthesis. Catalyzes the final step specific for the production of lignin monomers. Catalyzes the NADPH-dependent reduction of coniferaldehyde, 5-hydroxyconiferaldehyde, sinapaldehyde, 4-coumaraldehyde and caffeyl aldehyde to their respective alcohols. In Nicotiana tabacum (Common tobacco), this protein is Probable cinnamyl alcohol dehydrogenase 2 (CAD19).